We begin with the raw amino-acid sequence, 541 residues long: Cyclin-T1-4 (541 aa).

Residues 277 to 366 (VSEVESSVGG…KSRSGVEAPG (90 aa)) form a disordered region. The span at 307–325 (SDNLGGSTKATQNRSNDNG) shows a compositional bias: polar residues. Positions 336 to 354 (QKGERDTETKDSMHTESHP) are enriched in basic and acidic residues. Serine 396 is modified (phosphoserine). The interval 445-541 (EDDKDIQNKS…REPRRHSQER (97 aa)) is disordered. Positions 493 to 511 (MESPCEKQLGEGKRRHDNS) are enriched in basic and acidic residues. Residues 519–528 (KTNPGGSSHS) show a composition bias toward polar residues. Basic and acidic residues predominate over residues 529-541 (YGDREPRRHSQER).

The protein belongs to the cyclin family. Cyclin T subfamily.

The chain is Cyclin-T1-4 (CYCT1-4) from Arabidopsis thaliana (Mouse-ear cress).